Here is a 204-residue protein sequence, read N- to C-terminus: Lipid A acyltransferase PagP (204 aa).

Positions 1 to 25 (MSYKHLISACIFSSLCLGQVNAVLA) are cleaved as a signal peptide. Residues H76, D119, and S120 contribute to the active site.

This sequence belongs to the lipid A palmitoyltransferase family. As to quaternary structure, homodimer.

Its subcellular location is the cell outer membrane. The catalysed reaction is a lipid A + a 1,2-diacyl-sn-glycero-3-phosphocholine = a hepta-acyl lipid A + a 2-acyl-sn-glycero-3-phosphocholine. It carries out the reaction a lipid IVA + a 1,2-diacyl-sn-glycero-3-phosphocholine = a lipid IVB + a 2-acyl-sn-glycero-3-phosphocholine. It catalyses the reaction a lipid IIA + a 1,2-diacyl-sn-glycero-3-phosphocholine = a lipid IIB + a 2-acyl-sn-glycero-3-phosphocholine. Its function is as follows. Transfers a fatty acid residue from the sn-1 position of a phospholipid to the N-linked hydroxyfatty acid chain on the proximal unit of lipid A or its precursors. The polypeptide is Lipid A acyltransferase PagP (Yersinia enterocolitica serotype O:8 / biotype 1B (strain NCTC 13174 / 8081)).